Reading from the N-terminus, the 467-residue chain is Uronate isomerase (467 aa).

Belongs to the metallo-dependent hydrolases superfamily. Uronate isomerase family.

The enzyme catalyses D-glucuronate = D-fructuronate. It catalyses the reaction aldehydo-D-galacturonate = keto-D-tagaturonate. It participates in carbohydrate metabolism; pentose and glucuronate interconversion. This chain is Uronate isomerase, found in Clostridium acetobutylicum (strain ATCC 824 / DSM 792 / JCM 1419 / IAM 19013 / LMG 5710 / NBRC 13948 / NRRL B-527 / VKM B-1787 / 2291 / W).